The primary structure comprises 1083 residues: Carbamoyl phosphate synthase large chain (1083 aa).

Residues 1-402 (MPRRDDIKKI…SFQKALRGLE (402 aa)) form a carboxyphosphate synthetic domain region. Residues arginine 129, arginine 169, glycine 175, glycine 176, glutamate 208, isoleucine 210, glutamate 215, glycine 241, valine 242, histidine 243, glutamine 285, and glutamate 299 each coordinate ATP. In terms of domain architecture, ATP-grasp 1 spans 133 to 328 (KQAMDKIGLD…IAKIAAKLAV (196 aa)). Residues glutamine 285, glutamate 299, and asparagine 301 each contribute to the Mg(2+) site. Mn(2+) is bound by residues glutamine 285, glutamate 299, and asparagine 301. The interval 403 to 557 (VGAFGFGSDP…YSTYESETEV (155 aa)) is oligomerization domain. Positions 558–944 (PAKGDKKRVV…AFAKSQLAAG (387 aa)) are carbamoyl phosphate synthetic domain. The 196-residue stretch at 683 to 878 (SSLIDELGLR…VANLATKVMA (196 aa)) folds into the ATP-grasp 2 domain. ATP is bound by residues arginine 719, arginine 758, leucine 760, glutamate 765, glycine 790, valine 791, histidine 792, serine 793, glutamine 833, and glutamate 849. Mg(2+)-binding residues include glutamine 833, glutamate 849, and asparagine 851. Glutamine 833, glutamate 849, and asparagine 851 together coordinate Mn(2+). Positions 945-1083 (TVLPESGKIF…SLQRRYAQNV (139 aa)) constitute an MGS-like domain. The interval 945–1083 (TVLPESGKIF…SLQRRYAQNV (139 aa)) is allosteric domain.

Belongs to the CarB family. Composed of two chains; the small (or glutamine) chain promotes the hydrolysis of glutamine to ammonia, which is used by the large (or ammonia) chain to synthesize carbamoyl phosphate. Tetramer of heterodimers (alpha,beta)4. It depends on Mg(2+) as a cofactor. The cofactor is Mn(2+).

The catalysed reaction is hydrogencarbonate + L-glutamine + 2 ATP + H2O = carbamoyl phosphate + L-glutamate + 2 ADP + phosphate + 2 H(+). The enzyme catalyses hydrogencarbonate + NH4(+) + 2 ATP = carbamoyl phosphate + 2 ADP + phosphate + 2 H(+). It functions in the pathway amino-acid biosynthesis; L-arginine biosynthesis; carbamoyl phosphate from bicarbonate: step 1/1. The protein operates within pyrimidine metabolism; UMP biosynthesis via de novo pathway; (S)-dihydroorotate from bicarbonate: step 1/3. Functionally, large subunit of the glutamine-dependent carbamoyl phosphate synthetase (CPSase). CPSase catalyzes the formation of carbamoyl phosphate from the ammonia moiety of glutamine, carbonate, and phosphate donated by ATP, constituting the first step of 2 biosynthetic pathways, one leading to arginine and/or urea and the other to pyrimidine nucleotides. The large subunit (synthetase) binds the substrates ammonia (free or transferred from glutamine from the small subunit), hydrogencarbonate and ATP and carries out an ATP-coupled ligase reaction, activating hydrogencarbonate by forming carboxy phosphate which reacts with ammonia to form carbamoyl phosphate. This Rhodopirellula baltica (strain DSM 10527 / NCIMB 13988 / SH1) protein is Carbamoyl phosphate synthase large chain.